Consider the following 271-residue polypeptide: Phosphatidylglycerol--prolipoprotein diacylglyceryl transferase (271 aa).

7 helical membrane passes run Ile-21–Ala-41, Leu-60–Tyr-80, Val-95–Trp-115, Phe-124–Leu-144, Ser-176–Ile-196, Gly-203–Val-223, and Leu-230–Gly-250. Arg-143 is an a 1,2-diacyl-sn-glycero-3-phospho-(1'-sn-glycerol) binding site.

This sequence belongs to the Lgt family.

The protein localises to the cell inner membrane. It catalyses the reaction L-cysteinyl-[prolipoprotein] + a 1,2-diacyl-sn-glycero-3-phospho-(1'-sn-glycerol) = an S-1,2-diacyl-sn-glyceryl-L-cysteinyl-[prolipoprotein] + sn-glycerol 1-phosphate + H(+). It functions in the pathway protein modification; lipoprotein biosynthesis (diacylglyceryl transfer). Its function is as follows. Catalyzes the transfer of the diacylglyceryl group from phosphatidylglycerol to the sulfhydryl group of the N-terminal cysteine of a prolipoprotein, the first step in the formation of mature lipoproteins. In Vibrio vulnificus (strain CMCP6), this protein is Phosphatidylglycerol--prolipoprotein diacylglyceryl transferase.